The sequence spans 105 residues: MIVTTTNSIEGKQIEQYLGLVSGEVILGANVVRDFLASITDIIGGRSGTYESKLAEGREMAVQEMVKKARNMGANAVIGVDLDFETLRDGMMMCIATGTAVKLKE.

This sequence belongs to the UPF0145 family.

This chain is UPF0145 protein Aflv_1588, found in Anoxybacillus flavithermus (strain DSM 21510 / WK1).